The sequence spans 317 residues: Melanocyte-stimulating hormone receptor (317 aa).

The Extracellular segment spans residues Met1–Glu37. Asn29 carries N-linked (GlcNAc...) asparagine glycosylation. Residues Val38–Ile63 form a helical membrane-spanning segment. At Ala64–Pro72 the chain is on the cytoplasmic side. A helical transmembrane segment spans residues Met73–Leu93. Residues Glu94–Asn118 lie on the Extracellular side of the membrane. A helical membrane pass occupies residues Val119–Val140. Topologically, residues Asp141–Arg163 are cytoplasmic. The chain crosses the membrane as a helical span at residues Ile164 to Tyr183. Over Asn184–Cys191 the chain is Extracellular. A helical transmembrane segment spans residues Leu192–Leu211. Over Ala212–Ala240 the chain is Cytoplasmic. The helical transmembrane segment at Ala241 to Leu266 threads the bilayer. Over Cys267–Asn279 the chain is Extracellular. A helical membrane pass occupies residues Phe280–Phe300. At Arg301–Trp317 the chain is on the cytoplasmic side. Cys315 carries the S-palmitoyl cysteine lipid modification.

This sequence belongs to the G-protein coupled receptor 1 family. As to quaternary structure, interacts with MGRN1, but does not undergo MGRN1-mediated ubiquitination; this interaction competes with GNAS-binding and thus inhibits agonist-induced cAMP production. Interacts with OPN3; the interaction results in a decrease in MC1R-mediated cAMP signaling and ultimately a decrease in melanin production in melanocytes. In terms of tissue distribution, highly expressed in the testis.

The protein resides in the cell membrane. Its function is as follows. Receptor for MSH (alpha, beta) and ACTH. Does not seem to be active with gamma-MSH. The activity of this receptor is mediated by G proteins which activate adenylate cyclase. Mediates melanogenesis, the production of eumelanin (black/brown) and phaeomelanin (red/yellow), via regulation of cAMP signaling in melanocytes. In Bos taurus (Bovine), this protein is Melanocyte-stimulating hormone receptor (MC1R).